The following is a 526-amino-acid chain: Lysine--tRNA ligase (526 aa).

E431 and E438 together coordinate Mg(2+).

It belongs to the class-II aminoacyl-tRNA synthetase family. As to quaternary structure, homodimer. It depends on Mg(2+) as a cofactor.

The protein localises to the cytoplasm. It catalyses the reaction tRNA(Lys) + L-lysine + ATP = L-lysyl-tRNA(Lys) + AMP + diphosphate. This chain is Lysine--tRNA ligase, found in Chlamydia felis (strain Fe/C-56) (Chlamydophila felis).